The following is a 134-amino-acid chain: RuBisCO chaperone RbcX (134 aa).

A disordered region spans residues 97 to 134 (SNGNHRRSLLERLTQVDSSSTDQTEPNPGESDTSEDSE). The span at 111–122 (QVDSSSTDQTEP) shows a compositional bias: polar residues.

The protein belongs to the RbcX family. In terms of assembly, homodimer (RbcX2). Interacts with the exposed C-terminal peptide of RbcL ('Glu-459-Asp-468'); binds 2 RbcL peptides per RbcX2, stapling them into an RbcL2 dimer. A slightly longer peptide binds with a higher affinity, but no long-term stable interaction with RbcL is detected. Contacts a second RbcL monomer via its peripheral polar surface.

The protein localises to the carboxysome. It is found in the cytoplasm. Its function is as follows. An RbcL-specific chaperone. Required for assembly of the RbcL8 core, acting downstream of the major chaperonin (GroEL-GroES). Acts on newly folded RbcL, has a transient dynamic interaction with RbcL and is eventually displaced by RbcS. The central cleft of the RbcX homodimer (RbcX2) binds the C-terminus of an RbcL monomer, stabilizing the C-terminus and probably preventing its reassociation with chaperonin GroEL-ES. At the same time the peripheral region of RbcX2 binds a second RbcL monomer, bridging the RbcL homodimers in the correct orientation. The RbcX2(2)-bound RbcL dimers then assemble into the RbcL8 core (RbcL8-(RbcX2)8). RbcS binding triggers the release of RbcX2. Required for optimal reconstitution of RuBisCO into its RbcL8S8 holoenzyme form upon expression of rbcL-rbcS subunits in E.coli, and probably also in situ. A frameshift mutation that replaces half the protein reduces accumulation of both RbcL and RbcS subunits and halves activity of RuBisCO in situ and in E.coli. The chain is RuBisCO chaperone RbcX from Picosynechococcus sp. (strain ATCC 27264 / PCC 7002 / PR-6) (Agmenellum quadruplicatum).